Consider the following 168-residue polypeptide: ATP synthase subunit b (168 aa).

The helical transmembrane segment at 13–33 (WTFLFQTLNLLVVMGLLYVFL) threads the bilayer.

This sequence belongs to the ATPase B chain family. As to quaternary structure, F-type ATPases have 2 components, F(1) - the catalytic core - and F(0) - the membrane proton channel. F(1) has five subunits: alpha(3), beta(3), gamma(1), delta(1), epsilon(1). F(0) has three main subunits: a(1), b(2) and c(10-14). The alpha and beta chains form an alternating ring which encloses part of the gamma chain. F(1) is attached to F(0) by a central stalk formed by the gamma and epsilon chains, while a peripheral stalk is formed by the delta and b chains.

It is found in the cell membrane. Its function is as follows. F(1)F(0) ATP synthase produces ATP from ADP in the presence of a proton or sodium gradient. F-type ATPases consist of two structural domains, F(1) containing the extramembraneous catalytic core and F(0) containing the membrane proton channel, linked together by a central stalk and a peripheral stalk. During catalysis, ATP synthesis in the catalytic domain of F(1) is coupled via a rotary mechanism of the central stalk subunits to proton translocation. Functionally, component of the F(0) channel, it forms part of the peripheral stalk, linking F(1) to F(0). This is ATP synthase subunit b from Moorella thermoacetica (strain ATCC 39073 / JCM 9320).